The following is a 200-amino-acid chain: Protein Rv0461 (200 aa).

A disordered region spans residues 47-67 (DRAGKSWPGSTPKPQEDPVGV). The next 3 membrane-spanning stretches (helical) occupy residues 102-122 (FVLV…SLFY), 134-154 (VFVV…LALV), and 159-179 (LITA…AAAA).

The protein localises to the cell membrane. This chain is Protein Rv0461, found in Mycobacterium tuberculosis (strain ATCC 25618 / H37Rv).